The chain runs to 349 residues: Fructose-1,6-bisphosphatase class 1 (349 aa).

The Mg(2+) site is built by glutamate 113, aspartate 135, isoleucine 137, and aspartate 138. Residues 138–141 (DGSS), asparagine 230, tyrosine 258, and lysine 288 each bind substrate. Residue glutamate 294 participates in Mg(2+) binding.

Belongs to the FBPase class 1 family. In terms of assembly, homotetramer. Requires Mg(2+) as cofactor.

The protein resides in the cytoplasm. The enzyme catalyses beta-D-fructose 1,6-bisphosphate + H2O = beta-D-fructose 6-phosphate + phosphate. Its pathway is carbohydrate biosynthesis; Calvin cycle. This is Fructose-1,6-bisphosphatase class 1 from Nostoc punctiforme (strain ATCC 29133 / PCC 73102).